A 633-amino-acid polypeptide reads, in one-letter code: Chaperone protein HtpG (633 aa).

Residues 1–341 form an a; substrate-binding region; the sequence is MTAPHETMSF…SADLPLNVSR (341 aa). The b stretch occupies residues 342-562; the sequence is ELLQESRDVK…DGDMSGYLQR (221 aa). The tract at residues 563 to 633 is c; it reads LLKQAGQKAP…YVQRVNRLLA (71 aa).

The protein belongs to the heat shock protein 90 family. As to quaternary structure, homodimer.

It is found in the cytoplasm. Molecular chaperone. Has ATPase activity. This is Chaperone protein HtpG from Cupriavidus metallidurans (strain ATCC 43123 / DSM 2839 / NBRC 102507 / CH34) (Ralstonia metallidurans).